The primary structure comprises 813 residues: Hyaluronate lyase HylB (813 aa).

A signal peptide (tat-type signal) is located at residues 1-32 (MFGTPSRRTFLTASALSAMALAASPTVTDAIA). Residues N222, H272, and Y281 contribute to the active site.

The protein belongs to the polysaccharide lyase 8 family. Predicted to be exported by the Tat system. The position of the signal peptide cleavage has not been experimentally proven.

Its subcellular location is the secreted. It carries out the reaction [hyaluronan](n) = n 3-(4-deoxy-beta-D-gluc-4-enuronosyl)-N-acetyl-D-glucosamine + H2O. Its function is as follows. Degrades hyaluronic acid (HA) exclusively into HA disaccharides (HA-2). Produced HA-2s confer anti-inflammatory properties leading to reduced immunopathology in the mouse model of acne. In Cutibacterium acnes (strain DSM 16379 / KPA171202) (Propionibacterium acnes), this protein is Hyaluronate lyase HylB.